The primary structure comprises 236 residues: Pyridoxal phosphate homeostasis protein (236 aa).

K36 bears the N6-(pyridoxal phosphate)lysine mark.

It belongs to the pyridoxal phosphate-binding protein YggS/PROSC family.

Pyridoxal 5'-phosphate (PLP)-binding protein, which is involved in PLP homeostasis. This chain is Pyridoxal phosphate homeostasis protein, found in Vibrio cholerae serotype O1 (strain ATCC 39315 / El Tor Inaba N16961).